Consider the following 140-residue polypeptide: Putative transcription elongation factor S-II-like protein 349L (140 aa).

The TFIIS-type zinc-finger motif lies at 100–139 (GAIKCKCGSERVFSFSKQTRSGDESTSVFALCSSCKSKWV). Zn(2+) is bound by residues Cys104, Cys106, Cys131, and Cys134.

It belongs to the IIV-6 349L family.

The chain is Putative transcription elongation factor S-II-like protein 349L from Acheta domesticus (House cricket).